A 304-amino-acid chain; its full sequence is Nod factor export ATP-binding protein I (304 aa).

Residues 6–236 (IDFRNVEKRF…EIGCDVIEIY (231 aa)) enclose the ABC transporter domain. Residue 38–45 (GPNGAGKT) participates in ATP binding.

The protein belongs to the ABC transporter superfamily. Lipooligosaccharide exporter (TC 3.A.1.102) family. In terms of assembly, the complex is composed of two ATP-binding proteins (NodI) and two transmembrane proteins (NodJ).

It is found in the cell inner membrane. In terms of biological role, part of the ABC transporter complex NodIJ involved in the export of the nodulation factors (Nod factors), the bacterial signal molecules that induce symbiosis and subsequent nodulation induction. Nod factors are LCO (lipo-chitin oligosaccharide), a modified beta-1,4-linked N-acetylglucosamine oligosaccharide. This subunit is responsible for energy coupling to the transport system. The chain is Nod factor export ATP-binding protein I from Burkholderia lata (strain ATCC 17760 / DSM 23089 / LMG 22485 / NCIMB 9086 / R18194 / 383).